The following is a 599-amino-acid chain: Laccase-15 (599 aa).

Residues 1 to 29 form the signal peptide; sequence MKRCQSSRPTAAVAAVVAAVSMIIVLVSG. 2 Plastocyanin-like domains span residues 46-162 and 173-328; these read VVSQ…PRHG and REVP…YSSN. N-linked (GlcNAc...) asparagine glycosylation is found at Asn-51 and Asn-92. Positions 96 and 98 each coordinate Cu cation. Residue Asn-124 is glycosylated (N-linked (GlcNAc...) asparagine). Cu cation contacts are provided by His-141 and His-143. N-linked (GlcNAc...) asparagine glycans are attached at residues Asn-193, Asn-217, Asn-331, Asn-355, Asn-412, and Asn-454. The Plastocyanin-like 3 domain maps to 444 to 586; sequence ELAERPPRAY…AAVFIVEDGP (143 aa). Asn-503, His-506, His-508, His-565, Cys-566, His-567, His-571, and Met-576 together coordinate Cu cation.

It belongs to the multicopper oxidase family. Cu cation serves as cofactor.

The protein localises to the secreted. Its subcellular location is the extracellular space. It is found in the apoplast. The enzyme catalyses 4 hydroquinone + O2 = 4 benzosemiquinone + 2 H2O. Lignin degradation and detoxification of lignin-derived products. The polypeptide is Laccase-15 (LAC15) (Oryza sativa subsp. japonica (Rice)).